The following is a 397-amino-acid chain: uncharacterized protein (397 aa).

[4Fe-4S] cluster is bound by residues Cys47, Cys53, Cys56, and Cys131. S-adenosyl-L-methionine contacts are provided by Gln235, Phe262, Glu282, and Asp328. Cys354 acts as the Nucleophile in catalysis.

Belongs to the class I-like SAM-binding methyltransferase superfamily. RNA M5U methyltransferase family.

This is an uncharacterized protein from Zymomonas mobilis subsp. mobilis (strain ATCC 31821 / ZM4 / CP4).